A 447-amino-acid polypeptide reads, in one-letter code: MSTMTPAEIVSELDKHIIGQAKAKKAVAVALRNRWRRQQVAEPLRQEITPKNILMIGPTGVGKTEIARRLAKLADAPFIKIEATKFTEVGYVGRDVDSIVRDLIEISVKQTRETEMRKVRSKATDLAEDRILDVLLPQPRAVGFGASAEHANDDNNATRQTFRKRLREGQLDDKEIELDIEQPAVGMDIMAPPGMEEMTEQIRSMFSNLGSGKKQRRKVKIREALKLLTDEEAAKMLNDEEVKTKAVQNVEQNGIVFLDEIDKITSRNHEGGGGEVSRQGVQRDLLPLVEGTTINTKYGMVKTDHILFIASGAFHLAKPSDLIPELQGRFPIRVELDSLSVKDFEAILVATDASLVKQYQALLATEDVKLEFADDGIRRLAEIAYAVNEKTENIGARRLYTVIEKLLEEVSFAAGNHAGQSVTIDSAYVDRALGEVSKDEDLSRYVL.

ATP contacts are provided by residues isoleucine 18, 60–65 (GVGKTE), aspartate 259, glutamate 325, and arginine 397.

It belongs to the ClpX chaperone family. HslU subfamily. As to quaternary structure, a double ring-shaped homohexamer of HslV is capped on each side by a ring-shaped HslU homohexamer. The assembly of the HslU/HslV complex is dependent on binding of ATP.

It localises to the cytoplasm. Its function is as follows. ATPase subunit of a proteasome-like degradation complex; this subunit has chaperone activity. The binding of ATP and its subsequent hydrolysis by HslU are essential for unfolding of protein substrates subsequently hydrolyzed by HslV. HslU recognizes the N-terminal part of its protein substrates and unfolds these before they are guided to HslV for hydrolysis. This is ATP-dependent protease ATPase subunit HslU from Burkholderia pseudomallei (strain 668).